A 506-amino-acid polypeptide reads, in one-letter code: Zinc finger and SCAN domain containing protein 4D (506 aa).

The 83-residue stretch at 37–119 (SAQLNFSPSN…RFMESLTDEC (83 aa)) folds into the SCAN box domain. Residues 238-264 (SQGNSSHHVDFRSAPTPADVPMEEQPK) are disordered. 4 C2H2-type zinc fingers span residues 395-417 (FKCE…QRTH), 424-446 (LLCV…EIIH), 452-474 (FKCS…EMIH), and 480-503 (YVCS…RNYH).

Highly expressed at the 2-cell stage but its expression is rapidly turned off.

It localises to the nucleus. The protein resides in the chromosome. The protein localises to the telomere. In terms of biological role, transcription factor required to regulate early development. Binds telomeres and plays a key role in genomic stability by regulating telomere elongation. Acts as an activator of spontaneous telomere sister chromatid exchange (T-SCE) and telomere elongation. This chain is Zinc finger and SCAN domain containing protein 4D (Zscan4d), found in Mus musculus (Mouse).